Reading from the N-terminus, the 22-residue chain is Cysteine proteinase (22 aa).

The tract at residues 1–22 (GADDSDWRKKGAVNVIXKDQGQ) is disordered.

Belongs to the peptidase C1 family.

This chain is Cysteine proteinase, found in Trichomonas vaginalis.